The chain runs to 293 residues: Short-chain dehydrogenase/reductase PhomF' (293 aa).

NADP(+) is bound by residues isoleucine 31 and asparagine 102. The active-site Proton donor is serine 175. 3 residues coordinate NADP(+): tyrosine 190, lysine 194, and serine 225. Tyrosine 190 (proton acceptor) is an active-site residue. Residue lysine 194 is the Lowers pKa of active site Tyr of the active site.

It belongs to the short-chain dehydrogenases/reductases (SDR) family.

Functionally, short-chain dehydrogenase/reductase; part of the gene cluster that mediates the biosynthesis of the phomopsins, a group of hexapeptide mycotoxins which infects lupins and causes lupinosis disease in livestock. The role of phomF' within the phomopsins biosynthesis pathway has still to be determined. The pathway starts with the processing of the precursor phomA by several endopeptidases including kexin proteases as well as the cluster-specific S41 family peptidase phomP1 and the oligopeptidase phomG to produce 10 identical copies of the hexapeptide Tyr-Val-Ile-Pro-Ile-Asp. After being excised from the precursor peptide, the core peptides are cyclized and modified post-translationally by enzymes encoded within the gene cluster. The timing and order of proteolysis of the phomA precursor and PTMs are still unknown. Two tyrosinase-like enzymes, phomQ1 and phomQ2, catalyze the chlorination and hydroxylation of Tyr, respectively. PhomYb, is proposed to be involved in the construction of the macrocyclic structure. The other 4 ustYa family proteins may be involved in PTMs that generate the unique structure of phomopsin A. PhomYa is required for the hydroxylation of C-beta of Tyr. PhomYc, phomYd, and phomYe are responsible for the biosynthesis of 2,3-dehydroisoleucine (dIle), 2,3-dehydroaspartic acid (dAsp), and 3,4-dehydroproline (dPro), respectively. While dIle formation by phomYc is indispensable for the installation of dAsp by phomYd, the order of the other PTMs have not been elucidated yet. Most of the biosynthetic enzymes likely have broad substrate specificity, and thus, there might be a metabolic grid from a precursor to phomopsin A. The enzyme(s) responsible for the biosynthesis of 3,4-dehydrovaline (dVal) have also not been identified yet. Finally, phomM acts as an S-adenosylmethionine-dependent alpha-N-methyltransferase that catalyzes two successive N-methylation reactions, converting N-desmethyl-phomopsin A to phomopsin A and phomopsin A further to an N,N-dimethylated congener called phomopsin E. This Diaporthe leptostromiformis (Lupinosis disease fungus) protein is Short-chain dehydrogenase/reductase PhomF'.